A 249-amino-acid polypeptide reads, in one-letter code: MGETATLVLLRHGESEWNSLNLFTGWVDVGLTDKGRAEAVRSGELLAEQGLLPDALYTSLLRRAITTAHLALDAADRLWIPVRRSWRLNERHYGALQGLDKAETKARYGEEQFMAWRRSYDTPPPPIERGSTYSQDADPRYADIGGGPLTECLADVVVRFLPYFTDVIVPDLRSGKTVLIVAHGNSLRALVKHLDQMSDDDVVGLNIPTGIPLRYDLDARLRPLVPGGTYLDPEAAAAGAAAVASQGRG.

Substrate is bound by residues 11–18, 24–25, Arg-63, 90–93, Lys-101, and 117–118; these read RHGESEWN, TG, ERHY, and RR. Residue His-12 is the Tele-phosphohistidine intermediate of the active site. Catalysis depends on Glu-90, which acts as the Proton donor/acceptor. A disordered region spans residues 119-138; sequence SYDTPPPPIERGSTYSQDAD. Position 184–185 (184–185) interacts with substrate; sequence GN.

This sequence belongs to the phosphoglycerate mutase family. BPG-dependent PGAM subfamily.

It carries out the reaction (2R)-2-phosphoglycerate = (2R)-3-phosphoglycerate. The protein operates within carbohydrate degradation; glycolysis; pyruvate from D-glyceraldehyde 3-phosphate: step 3/5. In terms of biological role, catalyzes the interconversion of 2-phosphoglycerate and 3-phosphoglycerate. The chain is 2,3-bisphosphoglycerate-dependent phosphoglycerate mutase from Mycolicibacterium paratuberculosis (strain ATCC BAA-968 / K-10) (Mycobacterium paratuberculosis).